The following is a 117-amino-acid chain: Large ribosomal subunit protein bL19 (117 aa).

This sequence belongs to the bacterial ribosomal protein bL19 family.

This protein is located at the 30S-50S ribosomal subunit interface and may play a role in the structure and function of the aminoacyl-tRNA binding site. This Thioalkalivibrio sulfidiphilus (strain HL-EbGR7) protein is Large ribosomal subunit protein bL19.